Reading from the N-terminus, the 348-residue chain is Putative transport protein HP_0567 (348 aa).

Helical transmembrane passes span 6–26 (FFWI…QDFL), 27–47 (MDAL…VFLD), 56–76 (SFLC…FIVY), 143–163 (LKLI…FYYG), 194–214 (IVLL…GVMI), 224–244 (LGIL…LIWI), 266–286 (SILL…IVFI), and 300–320 (MLIF…GIIV).

Belongs to the autoinducer-2 exporter (AI-2E) (TC 2.A.86) family.

It localises to the cell membrane. This Helicobacter pylori (strain ATCC 700392 / 26695) (Campylobacter pylori) protein is Putative transport protein HP_0567.